Consider the following 65-residue polypeptide: Muscarinic toxin-like protein 2 (65 aa).

4 disulfide bridges follow: Cys-3–Cys-24, Cys-17–Cys-42, Cys-46–Cys-57, and Cys-58–Cys-63.

The protein belongs to the three-finger toxin family. Short-chain subfamily. Type C muscarinic toxin sub-subfamily. In terms of assembly, monomer. In terms of tissue distribution, expressed by the venom gland.

The protein resides in the secreted. This Naja kaouthia (Monocled cobra) protein is Muscarinic toxin-like protein 2.